A 63-amino-acid chain; its full sequence is Small ribosomal subunit protein eS17 (63 aa).

The protein belongs to the eukaryotic ribosomal protein eS17 family.

The sequence is that of Small ribosomal subunit protein eS17 from Methanococcus maripaludis (strain C7 / ATCC BAA-1331).